Here is a 149-residue protein sequence, read N- to C-terminus: Protegrin-3 (149 aa).

A signal peptide spans 1-29 (METQRASLCLGRWSLWLLLLALVVPSASA). Positions 30-130 (QALSYREAVL…DITCNEVQGV (101 aa)) are excised as a propeptide. Positions 61-80 (DQPPKADEDPGTPKPVSFTV) are disordered. 4 disulfides stabilise this stretch: C85-C96, C107-C124, C136-C145, and C138-C143. R148 is subject to Arginine amide.

It belongs to the cathelicidin family.

It localises to the secreted. Its function is as follows. Microbicidal activity. Active against E.coli, Listeria monocytogenes and C.albicans, in vitro. The protein is Protegrin-3 (NPG3) of Sus scrofa (Pig).